Consider the following 484-residue polypeptide: Serine/threonine-protein kinase RIO1 (484 aa).

A Protein kinase domain is found at 76–402 (ADLNGCLSTG…EFDNADHECS (327 aa)). ATP-binding residues include lysine 125 and leucine 198. Catalysis depends on aspartate 244, which acts as the Proton acceptor. Residues asparagine 249 and aspartate 261 each coordinate Mg(2+). The active-site 4-aspartylphosphate intermediate is the aspartate 261. The tract at residues 398–484 (DHECSSGTEE…KLVKKTKSKK (87 aa)) is disordered. Phosphoserine; by CK2 is present on residues serine 402, serine 403, serine 409, serine 416, serine 417, and serine 419. Residues 403–484 (SGTEEFSDDE…KLVKKTKSKK (82 aa)) are interaction with CKA2. Over residues 407–434 (EFSDDEEDGSSGSEEDDEEEGEYYDDDE) the composition is skewed to acidic residues. The tract at residues 440–484 (GKKHEDKDLKKLRKQEAKDAKREKRKTKVKKHIKKKLVKKTKSKK) is association with (pre-)40S ribosomal subunit. A compositionally biased stretch (basic and acidic residues) spans 442-461 (KHEDKDLKKLRKQEAKDAKR). The span at 462-484 (EKRKTKVKKHIKKKLVKKTKSKK) shows a compositional bias: basic residues.

The protein belongs to the protein kinase superfamily. RIO-type Ser/Thr kinase family. As to quaternary structure, interacts with CKA2. Mg(2+) serves as cofactor. Post-translationally, autophosphorylated. Phosphorylated by casein kinase II (CK2). Phosphorylation by CK2 stimulates RIO1 kinase activity and targets it for degradation at the G1/S transition of the cell cycle.

The protein resides in the cytoplasm. The enzyme catalyses L-seryl-[protein] + ATP = O-phospho-L-seryl-[protein] + ADP + H(+). It catalyses the reaction L-threonyl-[protein] + ATP = O-phospho-L-threonyl-[protein] + ADP + H(+). It carries out the reaction ATP + H2O = ADP + phosphate + H(+). Its function is as follows. Required for the final endonucleolytic cleavage at site D converting 20S pre-rRNA into the mature 18S rRNA. Required for the final steps of cytoplasmic maturation of the 40S ribosomal subunit. The association with the very late 40S subunit intermediate seems to follow RIO2 association with precursors of the 40S subunit and may involve a translation-like checkpoint point cycle preceeding the binding to the 60S ribosomal subunit. Despite the protein kinase domain is proposed to act predominantly as an ATPase. The catalytic activity regulates its dynamic association with the 40S subunit. Has a role in the cell cycle where it is required for entrance into S-phase and in the control of the onset of anaphase. Appears to also be involved in the maintenance of chromosome stability and correct mitotic segregation. This Saccharomyces cerevisiae (strain ATCC 204508 / S288c) (Baker's yeast) protein is Serine/threonine-protein kinase RIO1 (RIO1).